The following is a 552-amino-acid chain: CTP synthase (552 aa).

The tract at residues 1–267 (MAKFIFVTGG…AEQTLKLLRM (267 aa)) is amidoligase domain. Ser-13 lines the CTP pocket. Ser-13 contributes to the UTP binding site. Residues 14-19 (SIGKGI) and Asp-71 each bind ATP. Positions 71 and 141 each coordinate Mg(2+). Residues 148 to 150 (DIE), 188 to 193 (KTKPTQ), and Lys-224 contribute to the CTP site. UTP is bound by residues 188 to 193 (KTKPTQ) and Lys-224. In terms of domain architecture, Glutamine amidotransferase type-1 spans 292–534 (DIAIVGKYVQ…IQAAGNHKSQ (243 aa)). Gly-354 serves as a coordination point for L-glutamine. The active-site Nucleophile; for glutamine hydrolysis is the Cys-381. L-glutamine is bound by residues 382 to 385 (LGMQ), Glu-405, and Arg-462. Residues His-507 and Glu-509 contribute to the active site. The tract at residues 533 to 552 (SQPISDELDNQSTEMSISLS) is disordered.

Belongs to the CTP synthase family. Homotetramer.

The enzyme catalyses UTP + L-glutamine + ATP + H2O = CTP + L-glutamate + ADP + phosphate + 2 H(+). It carries out the reaction L-glutamine + H2O = L-glutamate + NH4(+). It catalyses the reaction UTP + NH4(+) + ATP = CTP + ADP + phosphate + 2 H(+). Its pathway is pyrimidine metabolism; CTP biosynthesis via de novo pathway; CTP from UDP: step 2/2. With respect to regulation, allosterically activated by GTP, when glutamine is the substrate; GTP has no effect on the reaction when ammonia is the substrate. The allosteric effector GTP functions by stabilizing the protein conformation that binds the tetrahedral intermediate(s) formed during glutamine hydrolysis. Inhibited by the product CTP, via allosteric rather than competitive inhibition. In terms of biological role, catalyzes the ATP-dependent amination of UTP to CTP with either L-glutamine or ammonia as the source of nitrogen. Regulates intracellular CTP levels through interactions with the four ribonucleotide triphosphates. This is CTP synthase from Picosynechococcus sp. (strain ATCC 27264 / PCC 7002 / PR-6) (Agmenellum quadruplicatum).